We begin with the raw amino-acid sequence, 119 residues long: Phosphoribosyl-AMP cyclohydrolase (119 aa).

Asp-78 is a binding site for Mg(2+). Zn(2+) is bound at residue Cys-79. Positions 80 and 82 each coordinate Mg(2+). Positions 95 and 102 each coordinate Zn(2+).

It belongs to the PRA-CH family. Homodimer. Mg(2+) is required as a cofactor. Zn(2+) serves as cofactor.

It is found in the cytoplasm. The catalysed reaction is 1-(5-phospho-beta-D-ribosyl)-5'-AMP + H2O = 1-(5-phospho-beta-D-ribosyl)-5-[(5-phospho-beta-D-ribosylamino)methylideneamino]imidazole-4-carboxamide. Its pathway is amino-acid biosynthesis; L-histidine biosynthesis; L-histidine from 5-phospho-alpha-D-ribose 1-diphosphate: step 3/9. In terms of biological role, catalyzes the hydrolysis of the adenine ring of phosphoribosyl-AMP. This chain is Phosphoribosyl-AMP cyclohydrolase, found in Jannaschia sp. (strain CCS1).